Reading from the N-terminus, the 225-residue chain is Adenylate kinase (225 aa).

10-15 contributes to the ATP binding site; sequence GSGKGT. The interval 30-59 is NMP; it reads ESGAIFRENISKGTEIGKKAKEYIDRGDLV. AMP is bound by residues S31, R36, 57–59, 85–88, and Q92; these read DLV and GFPR. Positions 126–165 are LID; sequence GRRLCENDNNHPNNIFIDAIKPDGDKCRVCGGALSARSDD. ATP is bound at residue R127. AMP-binding residues include R162 and R174. P211 is a binding site for ATP.

Belongs to the adenylate kinase family. As to quaternary structure, monomer.

The protein localises to the cytoplasm. It catalyses the reaction AMP + ATP = 2 ADP. It functions in the pathway purine metabolism; AMP biosynthesis via salvage pathway; AMP from ADP: step 1/1. In terms of biological role, catalyzes the reversible transfer of the terminal phosphate group between ATP and AMP. Plays an important role in cellular energy homeostasis and in adenine nucleotide metabolism. In Desulfatibacillum aliphaticivorans, this protein is Adenylate kinase.